The primary structure comprises 289 residues: Bis(5'-nucleosyl)-tetraphosphatase, symmetrical (289 aa).

This sequence belongs to the Ap4A hydrolase family.

It catalyses the reaction P(1),P(4)-bis(5'-adenosyl) tetraphosphate + H2O = 2 ADP + 2 H(+). Functionally, hydrolyzes diadenosine 5',5'''-P1,P4-tetraphosphate to yield ADP. This is Bis(5'-nucleosyl)-tetraphosphatase, symmetrical from Yersinia pseudotuberculosis serotype IB (strain PB1/+).